An 842-amino-acid chain; its full sequence is Ionotropic receptor 21a (842 aa).

A signal peptide spans 1-15 (MSYYWVALVLFTAQA). The N-linked (GlcNAc...) asparagine glycan is linked to Asn325. 2 helical membrane passes run 405–425 (WPVW…IVFT) and 437–457 (WGEV…AFSF). N-linked (GlcNAc...) asparagine glycosylation is present at Asn469. The chain crosses the membrane as a helical span at residues 479–499 (WLFTIIITSCYTGSIIAFVTL). Asn533, Asn558, Asn583, and Asn588 each carry an N-linked (GlcNAc...) asparagine glycan. Residues 680-700 (MFLLMALGYFLGATALVSEIV) form a helical membrane-spanning segment. The interval 722-745 (WSSASSGSMLRTNAEQLSHDKRKA) is disordered. N-linked (GlcNAc...) asparagine glycans are attached at residues Asn765 and Asn797.

It belongs to the glutamate-gated ion channel (TC 1.A.10.1) family. As to expression, expressed in the dorsal organ cool cells. In the antenna, expressed in approximately six neurons in the arista as well as five to ten neurons near the third chamber of the sacculus.

The protein resides in the cell membrane. Integral part of a neural sensory system in the antenna that provides the neural basis for the response to environmental changes in temperature (thermosensation). Together with Ir25a and Ir93a, mediates the response of the dorsal organ cool cells, a trio of cool-responsive neurons, to cooling and is required for cool avoidance behavior. The chain is Ionotropic receptor 21a from Drosophila melanogaster (Fruit fly).